Here is a 63-residue protein sequence, read N- to C-terminus: Large ribosomal subunit protein uL29 (63 aa).

Belongs to the universal ribosomal protein uL29 family.

This Vibrio cholerae serotype O1 (strain ATCC 39541 / Classical Ogawa 395 / O395) protein is Large ribosomal subunit protein uL29.